Here is a 132-residue protein sequence, read N- to C-terminus: Ribosome-binding factor A (132 aa).

It belongs to the RbfA family. In terms of assembly, monomer. Binds 30S ribosomal subunits, but not 50S ribosomal subunits or 70S ribosomes.

The protein resides in the cytoplasm. Its function is as follows. One of several proteins that assist in the late maturation steps of the functional core of the 30S ribosomal subunit. Associates with free 30S ribosomal subunits (but not with 30S subunits that are part of 70S ribosomes or polysomes). Required for efficient processing of 16S rRNA. May interact with the 5'-terminal helix region of 16S rRNA. In Pasteurella multocida (strain Pm70), this protein is Ribosome-binding factor A.